The following is a 236-amino-acid chain: Syntaxin-8 (236 aa).

At 1–215 (MAPDPWFSTY…MVDRKSASCG (215 aa)) the chain is on the cytoplasmic side. The stretch at 42-65 (VTIRALLQNLKEKIALLKDLLLRA) forms a coiled coil. Positions 145-207 (QKIIQEQDAG…RNETRRVNMV (63 aa)) constitute a t-SNARE coiled-coil homology domain. Serine 160 carries the phosphoserine modification. A helical; Anchor for type IV membrane protein transmembrane segment spans residues 216 to 232 (MIMVILLLLVAIVVVAV). Topologically, residues 233 to 236 (WPTN) are vesicular.

It belongs to the syntaxin family. As to quaternary structure, forms a SNARE complex with STX7, VTI1B and VAMP8 which functions in the homotypic fusion of late endosomes. Part of the SNARE core complex containing STX7, VAMP8 and VTI1B. Interacts with VAMP8. Interacts with HECTD3. Interacts with TPC1. In terms of processing, ubiquitinated by HECTD3. In terms of tissue distribution, highly expressed in heart. Also found in brain, kidney, liver, lung, placenta, skeletal muscle, spleen and pancreas.

It is found in the membrane. Its function is as follows. Vesicle trafficking protein that functions in the early secretory pathway, possibly by mediating retrograde transport from cis-Golgi membranes to the ER. In Homo sapiens (Human), this protein is Syntaxin-8 (STX8).